The following is a 484-amino-acid chain: N-succinylglutamate 5-semialdehyde dehydrogenase (484 aa).

Residue 221–226 (GSAAAG) coordinates NAD(+). Catalysis depends on residues E244 and C278.

It belongs to the aldehyde dehydrogenase family. AstD subfamily.

It carries out the reaction N-succinyl-L-glutamate 5-semialdehyde + NAD(+) + H2O = N-succinyl-L-glutamate + NADH + 2 H(+). Its pathway is amino-acid degradation; L-arginine degradation via AST pathway; L-glutamate and succinate from L-arginine: step 4/5. Functionally, catalyzes the NAD-dependent reduction of succinylglutamate semialdehyde into succinylglutamate. The protein is N-succinylglutamate 5-semialdehyde dehydrogenase of Caulobacter sp. (strain K31).